We begin with the raw amino-acid sequence, 106 residues long: Iron-sulfur cluster assembly protein CyaY (106 aa).

The protein belongs to the frataxin family.

In terms of biological role, involved in iron-sulfur (Fe-S) cluster assembly. May act as a regulator of Fe-S biogenesis. The sequence is that of Iron-sulfur cluster assembly protein CyaY from Salmonella newport (strain SL254).